Reading from the N-terminus, the 264-residue chain is 3-methyl-2-oxobutanoate hydroxymethyltransferase (264 aa).

Positions 45 and 84 each coordinate Mg(2+). 3-methyl-2-oxobutanoate-binding positions include 45–46 (DS), Asp84, and Lys113. Mg(2+) is bound at residue Glu115. Glu182 acts as the Proton acceptor in catalysis.

This sequence belongs to the PanB family. As to quaternary structure, homodecamer; pentamer of dimers. Mg(2+) serves as cofactor.

The protein resides in the cytoplasm. It carries out the reaction 3-methyl-2-oxobutanoate + (6R)-5,10-methylene-5,6,7,8-tetrahydrofolate + H2O = 2-dehydropantoate + (6S)-5,6,7,8-tetrahydrofolate. Its pathway is cofactor biosynthesis; (R)-pantothenate biosynthesis; (R)-pantoate from 3-methyl-2-oxobutanoate: step 1/2. Its function is as follows. Catalyzes the reversible reaction in which hydroxymethyl group from 5,10-methylenetetrahydrofolate is transferred onto alpha-ketoisovalerate to form ketopantoate. In Nitrosococcus oceani (strain ATCC 19707 / BCRC 17464 / JCM 30415 / NCIMB 11848 / C-107), this protein is 3-methyl-2-oxobutanoate hydroxymethyltransferase.